Here is a 392-residue protein sequence, read N- to C-terminus: Phosphopentomutase (392 aa).

6 residues coordinate Mn(2+): Asp-14, Asp-286, His-291, Asp-327, His-328, and His-339.

The protein belongs to the phosphopentomutase family. Requires Mn(2+) as cofactor.

The protein resides in the cytoplasm. The catalysed reaction is 2-deoxy-alpha-D-ribose 1-phosphate = 2-deoxy-D-ribose 5-phosphate. It catalyses the reaction alpha-D-ribose 1-phosphate = D-ribose 5-phosphate. It participates in carbohydrate degradation; 2-deoxy-D-ribose 1-phosphate degradation; D-glyceraldehyde 3-phosphate and acetaldehyde from 2-deoxy-alpha-D-ribose 1-phosphate: step 1/2. In terms of biological role, isomerase that catalyzes the conversion of deoxy-ribose 1-phosphate (dRib-1-P) and ribose 1-phosphate (Rib-1-P) to deoxy-ribose 5-phosphate (dRib-5-P) and ribose 5-phosphate (Rib-5-P), respectively. This chain is Phosphopentomutase, found in Staphylococcus aureus (strain Mu3 / ATCC 700698).